Reading from the N-terminus, the 394-residue chain is Protein-glutamate methylesterase/protein-glutamine glutaminase 2 (394 aa).

One can recognise a Response regulatory domain in the interval 4–121; it reads KVLVVDDSSF…ARNRDEAISL (118 aa). 4-aspartylphosphate is present on Asp55. The CheB-type methylesterase domain maps to 202–394; the sequence is SGKKYQLMAI…AERILVEVGR (193 aa). Residues Ser214, His241, and Asp337 contribute to the active site.

This sequence belongs to the CheB family. Post-translationally, phosphorylated by CheA. Phosphorylation of the N-terminal regulatory domain activates the methylesterase activity.

The protein localises to the cytoplasm. The catalysed reaction is [protein]-L-glutamate 5-O-methyl ester + H2O = L-glutamyl-[protein] + methanol + H(+). It catalyses the reaction L-glutaminyl-[protein] + H2O = L-glutamyl-[protein] + NH4(+). Involved in chemotaxis. Part of a chemotaxis signal transduction system that modulates chemotaxis in response to various stimuli. Catalyzes the demethylation of specific methylglutamate residues introduced into the chemoreceptors (methyl-accepting chemotaxis proteins or MCP) by CheR. Also mediates the irreversible deamidation of specific glutamine residues to glutamic acid. This is Protein-glutamate methylesterase/protein-glutamine glutaminase 2 from Photobacterium profundum (strain SS9).